Reading from the N-terminus, the 335-residue chain is Methionine import ATP-binding protein MetN 2 (335 aa).

In terms of domain architecture, ABC transporter spans 2–242 (IEFQNVHKTY…PEHPTTKRFV (241 aa)). An ATP-binding site is contributed by 38-45 (GHSGAGKS).

This sequence belongs to the ABC transporter superfamily. Methionine importer (TC 3.A.1.24) family. In terms of assembly, the complex is composed of two ATP-binding proteins (MetN), two transmembrane proteins (MetI) and a solute-binding protein (MetQ).

The protein resides in the cell inner membrane. It catalyses the reaction L-methionine(out) + ATP + H2O = L-methionine(in) + ADP + phosphate + H(+). The enzyme catalyses D-methionine(out) + ATP + H2O = D-methionine(in) + ADP + phosphate + H(+). In terms of biological role, part of the ABC transporter complex MetNIQ involved in methionine import. Responsible for energy coupling to the transport system. This Pseudomonas entomophila (strain L48) protein is Methionine import ATP-binding protein MetN 2.